The sequence spans 307 residues: MSVVSSVTVTVPATTANLGPGFDCIGAALTLYNKVKFTRLDAGGLIIHVTGKEAEGVNTDESNLLYQAFVKLYQHIEQIPPSVKIEIDLGVPLARGLGSSATAIVGGLVAANQLAGEPLSQLQVMELAIAMEGHPDNVVPALLGGCRLAATSAEGWEICDVPWDENVVPVVAIPDFELSTQEARRVLPTEFSRADAIFNTAHLGLLLRGLATGKGEWLKTALQDKLHQPYRKALIPGYDAVNQAAVAAGAYGMVISGAGPTLLALADAQNSQAVAAAMQTAWQTVGITADVRSLSLDNQGASSLNEG.

92-102 (PLARGLGSSAT) serves as a coordination point for ATP.

It belongs to the GHMP kinase family. Homoserine kinase subfamily.

It is found in the cytoplasm. It carries out the reaction L-homoserine + ATP = O-phospho-L-homoserine + ADP + H(+). The protein operates within amino-acid biosynthesis; L-threonine biosynthesis; L-threonine from L-aspartate: step 4/5. Functionally, catalyzes the ATP-dependent phosphorylation of L-homoserine to L-homoserine phosphate. This is Homoserine kinase (thrB) from Microchaete diplosiphon (Fremyella diplosiphon).